Here is a 122-residue protein sequence, read N- to C-terminus: Large ribosomal subunit protein uL14 (122 aa).

Belongs to the universal ribosomal protein uL14 family. In terms of assembly, part of the 50S ribosomal subunit. Forms a cluster with proteins L3 and L19. In the 70S ribosome, L14 and L19 interact and together make contacts with the 16S rRNA in bridges B5 and B8.

Binds to 23S rRNA. Forms part of two intersubunit bridges in the 70S ribosome. The protein is Large ribosomal subunit protein uL14 of Campylobacter hominis (strain ATCC BAA-381 / DSM 21671 / CCUG 45161 / LMG 19568 / NCTC 13146 / CH001A).